A 192-amino-acid chain; its full sequence is Natural cytotoxicity triggering receptor 3 (192 aa).

The signal sequence occupies residues 1–18 (MAKVLLIVFIMVYAGSCA). Residues 19–126 (IWVSQPPEIR…VGTGNGTRLV (108 aa)) form the Ig-like domain. Residues 19-147 (IWVSQPPEIR…AEPERAAYTS (129 aa)) lie on the Extracellular side of the membrane. C39 and C108 are disulfide-bonded. N42 and N121 each carry an N-linked (GlcNAc...) asparagine glycan. Residues 148-168 (LLLRAGVYALSFLSVATGSVI) traverse the membrane as a helical segment. Residues 169-192 (YYQGKCLCHVGNTATPPTASEERF) are Cytoplasmic-facing.

The protein belongs to the natural cytotoxicity receptor (NCR) family. Homodimer in the unliganted form. Interacts with CD3Z. Interacts with and is activated by binding to NCR3LG1. Interacts with and is activated by binding to BAG6. Interacts with and is inhibited by binding to LGALS3.

It localises to the cell membrane. Its function is as follows. Cell membrane receptor of natural killer/NK cells that is activated by binding of extracellular ligands including BAG6 and NCR3LG1. Stimulates NK cells cytotoxicity toward neighboring cells producing these ligands. It controls, for instance, NK cells cytotoxicity against tumor cells. Engagement of NCR3 by BAG6 also promotes myeloid dendritic cells (DC) maturation, both through killing DCs that did not acquire a mature phenotype, and inducing the release by NK cells of TNFA and IFNG that promote DC maturation. This chain is Natural cytotoxicity triggering receptor 3 (Ncr3), found in Rattus norvegicus (Rat).